The sequence spans 403 residues: G2/mitotic-specific cyclin-B1 (403 aa).

This sequence belongs to the cyclin family. Cyclin AB subfamily. Interacts with the CDC2 protein kinase to form a serine/threonine kinase holoenzyme complex also known as maturation promoting factor (MPF). The cyclin subunit imparts substrate specificity to the complex.

In terms of biological role, essential for the control of the cell cycle at the G2/M (mitosis) transition. The polypeptide is G2/mitotic-specific cyclin-B1 (ccnb1) (Anguilla japonica (Japanese eel)).